Here is a 294-residue protein sequence, read N- to C-terminus: N-acetylmuramic acid 6-phosphate etherase (294 aa).

An SIS domain is found at 54–217 (VIKSFEEEGR…STASMIGVGK (164 aa)). The active-site Proton donor is E82. E113 is an active-site residue.

It belongs to the GCKR-like family. MurNAc-6-P etherase subfamily. Homodimer.

It carries out the reaction N-acetyl-D-muramate 6-phosphate + H2O = N-acetyl-D-glucosamine 6-phosphate + (R)-lactate. Its pathway is amino-sugar metabolism; N-acetylmuramate degradation. In terms of biological role, specifically catalyzes the cleavage of the D-lactyl ether substituent of MurNAc 6-phosphate, producing GlcNAc 6-phosphate and D-lactate. The polypeptide is N-acetylmuramic acid 6-phosphate etherase (Bacillus cereus (strain B4264)).